The sequence spans 136 residues: Large-conductance mechanosensitive channel (136 aa).

A run of 2 helical transmembrane segments spans residues 10–30 (FAMRGNVVDLAVGVIIGAAFG) and 76–96 (GVFIQNVFDFLIVAFAIFMAI).

Belongs to the MscL family. Homopentamer.

The protein localises to the cell inner membrane. Channel that opens in response to stretch forces in the membrane lipid bilayer. May participate in the regulation of osmotic pressure changes within the cell. This Escherichia coli O127:H6 (strain E2348/69 / EPEC) protein is Large-conductance mechanosensitive channel.